The primary structure comprises 348 residues: Phosphate acyltransferase (348 aa).

This sequence belongs to the PlsX family. Homodimer. Probably interacts with PlsY.

The protein localises to the cytoplasm. It catalyses the reaction a fatty acyl-[ACP] + phosphate = an acyl phosphate + holo-[ACP]. The protein operates within lipid metabolism; phospholipid metabolism. In terms of biological role, catalyzes the reversible formation of acyl-phosphate (acyl-PO(4)) from acyl-[acyl-carrier-protein] (acyl-ACP). This enzyme utilizes acyl-ACP as fatty acyl donor, but not acyl-CoA. This is Phosphate acyltransferase from Leuconostoc citreum (strain KM20).